A 673-amino-acid polypeptide reads, in one-letter code: Citrate exporter 1 (673 aa).

The disordered stretch occupies residues 1-44 (MFNLNTKSSKEPEVTEVAVDSTPSSPVTRESSPESSPDNSAVDL). The segment covering 21–39 (STPSSPVTRESSPESSPDN) has biased composition (polar residues). A helical membrane pass occupies residues 67-87 (FLVFGAMAFCMLVSFMDQNGI). An N-linked (GlcNAc...) asparagine glycan is attached at Asn-99. Transmembrane regions (helical) follow at residues 103–123 (TISW…VLYG), 133–153 (LVFM…ACAQ), 164–184 (FSGI…SDIV), and 194–214 (GILG…GAAF). A glycan (N-linked (GlcNAc...) asparagine) is linked at Asn-217. 8 helical membrane passes run 222 to 242 (AIFY…FFIL), 261 to 281 (PGLF…AGGG), 292 to 312 (ISML…EGFF), 322 to 342 (IFGT…GIAY), 364 to 384 (AAGM…ISGQ), 393 to 413 (LEVI…KCFW), 419 to 439 (MALL…CFQP), and 465 to 485 (SFGG…SLKA). N-linked (GlcNAc...) asparagine glycosylation occurs at Asn-526. The chain crosses the membrane as a helical span at residues 529 to 549 (HTVFVFLCPIVGACLLVTVFV). The segment covering 564–596 (AKTVEDKDKDESGTDCEDMTKGEVLVSEKEGKL) has biased composition (basic and acidic residues). Disordered stretches follow at residues 564–608 (AKTV…MHFG) and 636–673 (FPPM…IQEE). N-linked (GlcNAc...) asparagine glycosylation is found at Asn-599 and Asn-662.

It belongs to the major facilitator superfamily.

It is found in the cell membrane. The catalysed reaction is citrate(in) = citrate(out). In terms of biological role, transmembrane transporter that exports citrate across the cell membrane. The polypeptide is Citrate exporter 1 (Yarrowia lipolytica (strain CLIB 122 / E 150) (Yeast)).